Here is a 475-residue protein sequence, read N- to C-terminus: Ankyrin repeat, SAM and basic leucine zipper domain-containing protein 1 (475 aa).

The segment at 1-25 (MAASALRGLPVAGGGESSESEDDGW) is disordered. 3 positions are modified to phosphoserine: S17, S18, and S20. ANK repeat units follow at residues 45–74 (EKKE…SVDS), 78–107 (YGWT…NASF), 110–144 (DKQS…DPNV), 148–177 (RLMT…EVNT), 181–210 (NGYT…NKML), and 214–243 (DGKM…PLEG). Residues 272-334 (SYTAFGDLEV…KILAALKELQ (63 aa)) form the SAM domain.

As to quaternary structure, interacts with DDX4, PIWIL1, RANBP9 and TDRD1. As to expression, expressed exclusively in the testis and ovary and at higher levels in the adult testis compared with the adult ovary.

It is found in the cytoplasm. Its function is as follows. Plays a central role during spermatogenesis by repressing transposable elements and preventing their mobilization, which is essential for the germline integrity. Acts via the piRNA metabolic process, which mediates the repression of transposable elements during meiosis by forming complexes composed of piRNAs and Piwi proteins and governs the methylation and subsequent repression of transposons. Its association with pi-bodies suggests a participation in the primary piRNAs metabolic process. Required prior to the pachytene stage to facilitate the production of multiple types of piRNAs, including those associated with repeats involved in the regulation of retrotransposons. May act by mediating protein-protein interactions during germ cell maturation. The protein is Ankyrin repeat, SAM and basic leucine zipper domain-containing protein 1 of Homo sapiens (Human).